Consider the following 264-residue polypeptide: Na(+)-translocating NADH-quinone reductase subunit E (264 aa).

6 helical membrane-spanning segments follow: residues valine 11–glycine 31, methionine 50–isoleucine 70, phenylalanine 90–leucine 110, glycine 123–isoleucine 143, phenylalanine 149–leucine 169, and methionine 189–isoleucine 209.

Belongs to the NqrDE/RnfAE family. Composed of six subunits; NqrA, NqrB, NqrC, NqrD, NqrE and NqrF.

It is found in the cell inner membrane. The catalysed reaction is a ubiquinone + n Na(+)(in) + NADH + H(+) = a ubiquinol + n Na(+)(out) + NAD(+). NQR complex catalyzes the reduction of ubiquinone-1 to ubiquinol by two successive reactions, coupled with the transport of Na(+) ions from the cytoplasm to the periplasm. NqrA to NqrE are probably involved in the second step, the conversion of ubisemiquinone to ubiquinol. In Chlamydia caviae (strain ATCC VR-813 / DSM 19441 / 03DC25 / GPIC) (Chlamydophila caviae), this protein is Na(+)-translocating NADH-quinone reductase subunit E.